Reading from the N-terminus, the 161-residue chain is Pleiotrophin-A (161 aa).

Positions 1 to 23 are cleaved as a signal peptide; it reads MRHQHGLFMLALLAFLFVITVLG. 5 disulfides stabilise this stretch: Cys41–Cys70, Cys49–Cys79, Cys56–Cys83, Cys93–Cys125, and Cys103–Cys135. Chondroitin sulfate binding stretches follow at residues 86–93 and 117–125; these read KKQFGAEC and KRALHNAEC. The interval 136 to 161 is disordered; sequence GKVTKPKLQESKKKKKEGKNKEKLLD. A chondroitin sulfate A binding region spans residues 141-161; that stretch reads PKLQESKKKKKEGKNKEKLLD.

The protein belongs to the pleiotrophin family. In terms of tissue distribution, expressed in high levels in brain and eye. Lower levels in bone. In the tailbud embryo stage, it is expressed exclusively in the central nervous system, especially in the hind region of the brain.

The protein localises to the secreted. Secreted growth factor that mediates its signal through cell-surface proteoglycan and non-proteoglycan receptors. Binds cell-surface proteoglycan receptor via their chondroitin sulfate (CS) groups. Thereby regulates many processes like cell proliferation, cell survival, cell growth, cell differentiation and cell migration. Has antibacterial activity against both Gram-positive and Gram-negative bacteria. The chain is Pleiotrophin-A (ptn-a) from Xenopus laevis (African clawed frog).